Consider the following 195-residue polypeptide: uncharacterized protein (195 aa).

Residues 175–195 (ILGKISGFFGSIVSTIFSLFG) traverse the membrane as a helical segment.

It is found in the membrane. This is an uncharacterized protein from Methanocaldococcus jannaschii (strain ATCC 43067 / DSM 2661 / JAL-1 / JCM 10045 / NBRC 100440) (Methanococcus jannaschii).